The chain runs to 453 residues: Bifunctional protein GlmU (453 aa).

The tract at residues 1–226 (MTLDVVILAA…ALEVEGVNNR (226 aa)) is pyrophosphorylase. UDP-N-acetyl-alpha-D-glucosamine is bound by residues 8–11 (LAAG), Lys-22, Gln-73, 78–79 (GT), 99–101 (YGD), Gly-136, Glu-151, Asn-166, and Asn-224. Mg(2+) is bound at residue Asp-101. Asn-224 is a binding site for Mg(2+). The tract at residues 227 to 247 (SQMAALERAYQRDRAERLLTE) is linker. Residues 248-453 (GVALADPARF…AGWKRPRKSS (206 aa)) form an N-acetyltransferase region. The UDP-N-acetyl-alpha-D-glucosamine site is built by Arg-330 and Lys-348. His-360 (proton acceptor) is an active-site residue. The UDP-N-acetyl-alpha-D-glucosamine site is built by Tyr-363 and Asn-374. Residues Ala-377, 383–384 (NY), Ser-402, Ala-420, and Arg-437 contribute to the acetyl-CoA site.

In the N-terminal section; belongs to the N-acetylglucosamine-1-phosphate uridyltransferase family. It in the C-terminal section; belongs to the transferase hexapeptide repeat family. As to quaternary structure, homotrimer. Mg(2+) serves as cofactor.

The protein resides in the cytoplasm. It catalyses the reaction alpha-D-glucosamine 1-phosphate + acetyl-CoA = N-acetyl-alpha-D-glucosamine 1-phosphate + CoA + H(+). It carries out the reaction N-acetyl-alpha-D-glucosamine 1-phosphate + UTP + H(+) = UDP-N-acetyl-alpha-D-glucosamine + diphosphate. It participates in nucleotide-sugar biosynthesis; UDP-N-acetyl-alpha-D-glucosamine biosynthesis; N-acetyl-alpha-D-glucosamine 1-phosphate from alpha-D-glucosamine 6-phosphate (route II): step 2/2. Its pathway is nucleotide-sugar biosynthesis; UDP-N-acetyl-alpha-D-glucosamine biosynthesis; UDP-N-acetyl-alpha-D-glucosamine from N-acetyl-alpha-D-glucosamine 1-phosphate: step 1/1. The protein operates within bacterial outer membrane biogenesis; LPS lipid A biosynthesis. Catalyzes the last two sequential reactions in the de novo biosynthetic pathway for UDP-N-acetylglucosamine (UDP-GlcNAc). The C-terminal domain catalyzes the transfer of acetyl group from acetyl coenzyme A to glucosamine-1-phosphate (GlcN-1-P) to produce N-acetylglucosamine-1-phosphate (GlcNAc-1-P), which is converted into UDP-GlcNAc by the transfer of uridine 5-monophosphate (from uridine 5-triphosphate), a reaction catalyzed by the N-terminal domain. The chain is Bifunctional protein GlmU from Chromohalobacter salexigens (strain ATCC BAA-138 / DSM 3043 / CIP 106854 / NCIMB 13768 / 1H11).